Consider the following 210-residue polypeptide: Signal peptidase complex catalytic subunit SEC11 (210 aa).

The Cytoplasmic portion of the chain corresponds to 1–14 (MLSSLSPHLSNVRQ). Residues 15–31 (TLTQVLNFALVLSTAFM) traverse the membrane as a helical; Signal-anchor for type II membrane protein segment. Residues 32-210 (MWKALSIYTN…MGVMVILQRE (179 aa)) lie on the Lumenal side of the membrane. N-linked (GlcNAc...) asparagine glycosylation occurs at N41. Active-site charge relay system residues include S53 and H92. Over residues 101–110 (DARDPKEGGG) the composition is skewed to basic and acidic residues. The tract at residues 101 to 124 (DARDPKEGGGKKGKSASGTGKKES) is disordered. The active-site Charge relay system is D152. Residues 196-207 (VLLGLMGVMVIL) form a C-terminal short (CTS) helix region.

It belongs to the peptidase S26B family. Component of the signal peptidase complex (SPC) composed of a catalytic subunit SEC11 and three accessory subunits SPC1, SPC2 and SPC3. The complex induces a local thinning of the ER membrane which is used to measure the length of the signal peptide (SP) h-region of protein substrates. This ensures the selectivity of the complex towards h-regions shorter than 18-20 amino acids. SPC associates with the translocon complex.

The protein localises to the endoplasmic reticulum membrane. It catalyses the reaction Cleavage of hydrophobic, N-terminal signal or leader sequences from secreted and periplasmic proteins.. In terms of biological role, catalytic component of the signal peptidase complex (SPC) which catalyzes the cleavage of N-terminal signal sequences from nascent proteins as they are translocated into the lumen of the endoplasmic reticulum. Specifically cleaves N-terminal signal peptides that contain a hydrophobic alpha-helix (h-region) shorter than 18-20 amino acids. This chain is Signal peptidase complex catalytic subunit SEC11 (SEC11), found in Uncinocarpus reesii (strain UAMH 1704).